We begin with the raw amino-acid sequence, 352 residues long: Cyclin-dependent kinase-like 1 (352 aa).

Residues 4-287 form the Protein kinase domain; the sequence is YEKIGKIGEG…CEQLLQHPYF (284 aa). ATP is bound by residues 10 to 18 and Lys33; that span reads IGEGSYGVV. The short motif at 45 to 51 is the [NKR]KIAxRE element; it reads KKIALRE. Asp126 serves as the catalytic Proton acceptor.

Belongs to the protein kinase superfamily. CMGC Ser/Thr protein kinase family. CDC2/CDKX subfamily.

Its subcellular location is the cytoplasm. The protein resides in the nucleus. The catalysed reaction is L-seryl-[protein] + ATP = O-phospho-L-seryl-[protein] + ADP + H(+). The enzyme catalyses L-threonyl-[protein] + ATP = O-phospho-L-threonyl-[protein] + ADP + H(+). The sequence is that of Cyclin-dependent kinase-like 1 from Mus musculus (Mouse).